Reading from the N-terminus, the 255-residue chain is 5'-methylthioadenosine/S-adenosylhomocysteine nucleosidase (255 aa).

The active-site Proton acceptor is E14. Substrate-binding positions include G80, L176, and 196-197 (ME). D220 functions as the Proton donor in the catalytic mechanism.

It belongs to the PNP/UDP phosphorylase family. MtnN subfamily.

The catalysed reaction is S-adenosyl-L-homocysteine + H2O = S-(5-deoxy-D-ribos-5-yl)-L-homocysteine + adenine. It catalyses the reaction S-methyl-5'-thioadenosine + H2O = 5-(methylsulfanyl)-D-ribose + adenine. The enzyme catalyses 5'-deoxyadenosine + H2O = 5-deoxy-D-ribose + adenine. It functions in the pathway amino-acid biosynthesis; L-methionine biosynthesis via salvage pathway; S-methyl-5-thio-alpha-D-ribose 1-phosphate from S-methyl-5'-thioadenosine (hydrolase route): step 1/2. In terms of biological role, catalyzes the irreversible cleavage of the glycosidic bond in both 5'-methylthioadenosine (MTA) and S-adenosylhomocysteine (SAH/AdoHcy) to adenine and the corresponding thioribose, 5'-methylthioribose and S-ribosylhomocysteine, respectively. Also cleaves 5'-deoxyadenosine, a toxic by-product of radical S-adenosylmethionine (SAM) enzymes, into 5-deoxyribose and adenine. This is 5'-methylthioadenosine/S-adenosylhomocysteine nucleosidase (mtnN) from Mycobacterium bovis (strain ATCC BAA-935 / AF2122/97).